A 396-amino-acid chain; its full sequence is Elongation factor Tu (396 aa).

Positions 10-206 (KPHVNVGTIG…ALDSYIPTPE (197 aa)) constitute a tr-type G domain. The tract at residues 19–26 (GHVDHGKT) is G1. Residue 19-26 (GHVDHGKT) participates in GTP binding. Threonine 26 contacts Mg(2+). A G2 region spans residues 60–64 (GITIN). The tract at residues 81–84 (DCPG) is G3. GTP is bound by residues 81 to 85 (DCPGH) and 136 to 139 (NKCD). Residues 136–139 (NKCD) form a G4 region. The segment at 174 to 176 (SAL) is G5.

This sequence belongs to the TRAFAC class translation factor GTPase superfamily. Classic translation factor GTPase family. EF-Tu/EF-1A subfamily. As to quaternary structure, monomer.

Its subcellular location is the cytoplasm. It carries out the reaction GTP + H2O = GDP + phosphate + H(+). Functionally, GTP hydrolase that promotes the GTP-dependent binding of aminoacyl-tRNA to the A-site of ribosomes during protein biosynthesis. The sequence is that of Elongation factor Tu from Aromatoleum aromaticum (strain DSM 19018 / LMG 30748 / EbN1) (Azoarcus sp. (strain EbN1)).